The chain runs to 358 residues: Holliday junction branch migration complex subunit RuvB (358 aa).

Residues 1–24 (MSIQTDDFAAPPPKRILSGAPASP) form a disordered region. Residues 5 to 194 (TDDFAAPPPK…FGIVARLEFY (190 aa)) form a large ATPase domain (RuvB-L) region. ATP is bound by residues Leu33, Arg34, Gly75, Lys78, Thr79, Thr80, 141–143 (EDY), Arg184, Tyr194, and Arg231. Residue Thr79 coordinates Mg(2+). The interval 195-265 (SPEELASIVR…IAHRALVMLD (71 aa)) is small ATPAse domain (RuvB-S). The segment at 268 to 358 (PQGFDLMDRK…GDMFGAMRPE (91 aa)) is head domain (RuvB-H). Residues Arg304, Arg323, and Arg328 each contribute to the DNA site.

Belongs to the RuvB family. In terms of assembly, homohexamer. Forms an RuvA(8)-RuvB(12)-Holliday junction (HJ) complex. HJ DNA is sandwiched between 2 RuvA tetramers; dsDNA enters through RuvA and exits via RuvB. An RuvB hexamer assembles on each DNA strand where it exits the tetramer. Each RuvB hexamer is contacted by two RuvA subunits (via domain III) on 2 adjacent RuvB subunits; this complex drives branch migration. In the full resolvosome a probable DNA-RuvA(4)-RuvB(12)-RuvC(2) complex forms which resolves the HJ.

Its subcellular location is the cytoplasm. It carries out the reaction ATP + H2O = ADP + phosphate + H(+). The RuvA-RuvB-RuvC complex processes Holliday junction (HJ) DNA during genetic recombination and DNA repair, while the RuvA-RuvB complex plays an important role in the rescue of blocked DNA replication forks via replication fork reversal (RFR). RuvA specifically binds to HJ cruciform DNA, conferring on it an open structure. The RuvB hexamer acts as an ATP-dependent pump, pulling dsDNA into and through the RuvAB complex. RuvB forms 2 homohexamers on either side of HJ DNA bound by 1 or 2 RuvA tetramers; 4 subunits per hexamer contact DNA at a time. Coordinated motions by a converter formed by DNA-disengaged RuvB subunits stimulates ATP hydrolysis and nucleotide exchange. Immobilization of the converter enables RuvB to convert the ATP-contained energy into a lever motion, pulling 2 nucleotides of DNA out of the RuvA tetramer per ATP hydrolyzed, thus driving DNA branch migration. The RuvB motors rotate together with the DNA substrate, which together with the progressing nucleotide cycle form the mechanistic basis for DNA recombination by continuous HJ branch migration. Branch migration allows RuvC to scan DNA until it finds its consensus sequence, where it cleaves and resolves cruciform DNA. In Albidiferax ferrireducens (strain ATCC BAA-621 / DSM 15236 / T118) (Rhodoferax ferrireducens), this protein is Holliday junction branch migration complex subunit RuvB.